A 435-amino-acid chain; its full sequence is U-box domain-containing protein 36 (435 aa).

Residues 227-345 adopt a coiled-coil conformation; the sequence is EAEASKRKAR…LKGKREEEEA (119 aa). The 75-residue stretch at 352 to 426 folds into the U-box domain; sequence EPPQYFICPI…QEWLQLRELL (75 aa).

It carries out the reaction S-ubiquitinyl-[E2 ubiquitin-conjugating enzyme]-L-cysteine + [acceptor protein]-L-lysine = [E2 ubiquitin-conjugating enzyme]-L-cysteine + N(6)-ubiquitinyl-[acceptor protein]-L-lysine.. It participates in protein modification; protein ubiquitination. Its function is as follows. Functions as an E3 ubiquitin ligase. This chain is U-box domain-containing protein 36 (PUB36), found in Arabidopsis thaliana (Mouse-ear cress).